Consider the following 82-residue polypeptide: Cytochrome b559 subunit alpha (82 aa).

A helical transmembrane segment spans residues 21-35; the sequence is VIHSITIPALFIAGW. Residue His-23 coordinates heme.

This sequence belongs to the PsbE/PsbF family. Heterodimer of an alpha subunit and a beta subunit. PSII is composed of 1 copy each of membrane proteins PsbA, PsbB, PsbC, PsbD, PsbE, PsbF, PsbH, PsbI, PsbJ, PsbK, PsbL, PsbM, PsbT, PsbX, PsbY, PsbZ, Psb30/Ycf12, peripheral proteins PsbO, CyanoQ (PsbQ), PsbU, PsbV and a large number of cofactors. It forms dimeric complexes. Requires heme b as cofactor.

The protein resides in the cellular thylakoid membrane. Its function is as follows. This b-type cytochrome is tightly associated with the reaction center of photosystem II (PSII). PSII is a light-driven water:plastoquinone oxidoreductase that uses light energy to abstract electrons from H(2)O, generating O(2) and a proton gradient subsequently used for ATP formation. It consists of a core antenna complex that captures photons, and an electron transfer chain that converts photonic excitation into a charge separation. The sequence is that of Cytochrome b559 subunit alpha from Nostoc sp. (strain PCC 7120 / SAG 25.82 / UTEX 2576).